A 562-amino-acid chain; its full sequence is 2-hydroxyisobutanoyl-CoA mutase large subunit (562 aa).

Residues 76–79, 86–88, aspartate 117, 196–198, arginine 235, asparagine 240, histidine 245, and arginine 284 contribute to the (3S)-3-hydroxybutanoyl-CoA site; these read YPTM, TMR, and TVQ.

The protein belongs to the acyl-CoA mutase large subunit family. Homotetramer composed of two large substrate-binding subunits (HcmA) and two small cobalamin-binding subunits (HcmB).

The catalysed reaction is 2-hydroxyisobutanoyl-CoA = (3S)-3-hydroxybutanoyl-CoA. In terms of biological role, together with HcmB, catalyzes the isomerization of 2-hydroxyisobutyryl-CoA and 3-hydroxybutyryl-CoA. Is specific for 2-hydroxyisobutyryl-CoA and (S)-3-hydroxybutyryl-CoA, and shows only very low activity with (R)-3-hydroxybutyryl-CoA, isobutyryl-CoA and butyryl-CoA. In vitro, can isomerize pivalyl-CoA and isovaleryl-CoA, with much lower efficiency. Plays a central role in the degradation of substrates bearing a tert-butyl moiety, such as the fuel oxygenate methyl tert-butyl ether (MTBE) and its metabolites. The chain is 2-hydroxyisobutanoyl-CoA mutase large subunit from Aquincola tertiaricarbonis.